The sequence spans 209 residues: Large ribosomal subunit protein uL3 (209 aa).

The segment at 127–151 (SGGPSSHGSKFHRHLGGTGQATTPA) is disordered.

This sequence belongs to the universal ribosomal protein uL3 family. In terms of assembly, part of the 50S ribosomal subunit. Forms a cluster with proteins L14 and L19.

In terms of biological role, one of the primary rRNA binding proteins, it binds directly near the 3'-end of the 23S rRNA, where it nucleates assembly of the 50S subunit. This Borrelia turicatae (strain 91E135) protein is Large ribosomal subunit protein uL3.